The primary structure comprises 162 residues: Disulfide bond formation protein B (162 aa).

Residues 1 to 10 lie on the Cytoplasmic side of the membrane; the sequence is MGDWLLRRRG. The helical transmembrane segment at 11 to 27 threads the bilayer; that stretch reads LALLLVLTLLLNLGALG. The Periplasmic segment spans residues 28–45; the sequence is LEYLADMPPCPLCWVQRG. Cysteines 37 and 40 form a disulfide. The helical transmembrane segment at 46–62 threads the bilayer; sequence VFGLMSLVALVGLVYFP. The Cytoplasmic segment spans residues 63–68; it reads RGWGRW. A helical membrane pass occupies residues 69–86; that stretch reads PLAGALGLSALTGVIIAL. At 87-140 the chain is on the periplasmic side; it reads RHLYIQANPDAVSCGMSPEVLAQFLPWWEVLLEILSGTTDCTQVDAVLGVPLPG. The cysteines at positions 100 and 127 are disulfide-linked. A helical membrane pass occupies residues 141-159; sequence WTLVGYLALGALGLYAVLA. The Cytoplasmic segment spans residues 160-162; it reads RRA.

The protein belongs to the DsbB family.

The protein localises to the cell inner membrane. Its function is as follows. Required for disulfide bond formation in some periplasmic proteins. Acts by oxidizing the DsbA protein. The sequence is that of Disulfide bond formation protein B from Alkalilimnicola ehrlichii (strain ATCC BAA-1101 / DSM 17681 / MLHE-1).